Here is a 116-residue protein sequence, read N- to C-terminus: Photosystem II assembly factor Psb28 protein (116 aa).

It belongs to the Psb28 family. Part of a photosystem II (PSII) assembly intermediate complex PSII-I; crystallized from a strain deleted of psbJ, it forms monomeric PSII before addition of the oxygen evolving complex. PSII-I includes 3 assembly factors not found in mature PSII (Psb27, Psb28 and Psb34). This protein binds to the cytoplasmic face of D1 and D2 (psbA and psbD), contacting CP47 (psbB) directly above the quinone b-binding site.

It localises to the cellular thylakoid membrane. A photosystem II (PSII) assembly factor that binds PSII during biogenesis, protecting the complex until water splitting is activated. This is Photosystem II assembly factor Psb28 protein from Thermosynechococcus vestitus (strain NIES-2133 / IAM M-273 / BP-1).